We begin with the raw amino-acid sequence, 194 residues long: 3-isopropylmalate dehydratase small subunit (194 aa).

It belongs to the LeuD family. LeuD type 1 subfamily. In terms of assembly, heterodimer of LeuC and LeuD.

It carries out the reaction (2R,3S)-3-isopropylmalate = (2S)-2-isopropylmalate. It functions in the pathway amino-acid biosynthesis; L-leucine biosynthesis; L-leucine from 3-methyl-2-oxobutanoate: step 2/4. Catalyzes the isomerization between 2-isopropylmalate and 3-isopropylmalate, via the formation of 2-isopropylmaleate. This is 3-isopropylmalate dehydratase small subunit from Anoxybacillus flavithermus (strain DSM 21510 / WK1).